The following is a 143-amino-acid chain: Transcriptional regulator MraZ (143 aa).

SpoVT-AbrB domains are found at residues 5–47 and 76–119; these read QYEH…SLEE and AVEC…SKEV.

This sequence belongs to the MraZ family. In terms of assembly, forms oligomers.

The protein resides in the cytoplasm. It is found in the nucleoid. This is Transcriptional regulator MraZ from Thermoanaerobacter pseudethanolicus (strain ATCC 33223 / 39E) (Clostridium thermohydrosulfuricum).